Consider the following 130-residue polypeptide: Cytochrome b-c1 complex subunit 7 (130 aa).

It belongs to the UQCRB/QCR7 family. Component of the ubiquinol-cytochrome c oxidoreductase (cytochrome b-c1 complex, complex III, CIII), a multisubunit enzyme composed of 3 respiratory subunits cytochrome b, cytochrome c1 and Rieske protein, 2 core protein subunits, and additional low-molecular weight protein subunits. The complex exists as an obligatory dimer and forms supercomplexes (SCs) in the inner mitochondrial membrane with cytochrome c oxidase (complex IV, CIV).

The protein resides in the mitochondrion inner membrane. Component of the ubiquinol-cytochrome c oxidoreductase, a multisubunit transmembrane complex that is part of the mitochondrial electron transport chain which drives oxidative phosphorylation. The respiratory chain contains 3 multisubunit complexes succinate dehydrogenase (complex II, CII), ubiquinol-cytochrome c oxidoreductase (cytochrome b-c1 complex, complex III, CIII) and cytochrome c oxidase (complex IV, CIV), that cooperate to transfer electrons derived from NADH and succinate to molecular oxygen, creating an electrochemical gradient over the inner membrane that drives transmembrane transport and the ATP synthase. The cytochrome b-c1 complex catalyzes electron transfer from ubiquinol to cytochrome c, linking this redox reaction to translocation of protons across the mitochondrial inner membrane, with protons being carried across the membrane as hydrogens on the quinol. In the process called Q cycle, 2 protons are consumed from the matrix, 4 protons are released into the intermembrane space and 2 electrons are passed to cytochrome c. The polypeptide is Cytochrome b-c1 complex subunit 7 (Schistosoma mansoni (Blood fluke)).